Consider the following 389-residue polypeptide: MNTHEFQAKQILRKYGIPVPDFYIASSSKEVEEIIKQYQLQSAIIKVQVHAGGRGKAGGVKLATNPQEILEFSQELIGKKIINEQTGPSGMISHQVLISPAILIKKEFYLGITINRELASRVLIASPIGGVNIEKIAHEQPNQLLMLPIPLEETFRSYHLIRIASFMGWKGKQIQEGVAIIQSLVKAFKETDASLLEINPLVETKEGHLLALDAKLSIDDNALFKHEDLKTLFDPSQMSNNEARAQQFELAYVALEGEIGCMVNGAGLAMATMDLIQYHGGRPANFLDVGGGASQVKVAEGFRIILSDSNVKAILINIFGGIMNCETLASGIIEAAKGLQIHIPLIVRMEGTNVEKGKQLLQQSGLKILITENLTEAAQQAVQLAQSVR.

Residues 9-244 form the ATP-grasp domain; sequence KQILRKYGIP…PSQMSNNEAR (236 aa). Residues lysine 46, 53–55, isoleucine 102, and glutamate 107 each bind ATP; that span reads GRG. Mg(2+)-binding residues include asparagine 199 and aspartate 213. Substrate contacts are provided by residues asparagine 264 and 321 to 323; that span reads GIM.

Belongs to the succinate/malate CoA ligase beta subunit family. Heterotetramer of two alpha and two beta subunits. The cofactor is Mg(2+).

The catalysed reaction is succinate + ATP + CoA = succinyl-CoA + ADP + phosphate. It catalyses the reaction GTP + succinate + CoA = succinyl-CoA + GDP + phosphate. The protein operates within carbohydrate metabolism; tricarboxylic acid cycle; succinate from succinyl-CoA (ligase route): step 1/1. In terms of biological role, succinyl-CoA synthetase functions in the citric acid cycle (TCA), coupling the hydrolysis of succinyl-CoA to the synthesis of either ATP or GTP and thus represents the only step of substrate-level phosphorylation in the TCA. The beta subunit provides nucleotide specificity of the enzyme and binds the substrate succinate, while the binding sites for coenzyme A and phosphate are found in the alpha subunit. The sequence is that of Succinate--CoA ligase [ADP-forming] subunit beta from Protochlamydia amoebophila (strain UWE25).